A 153-amino-acid polypeptide reads, in one-letter code: Small ribosomal subunit protein bS6 (153 aa).

Residues 97-153 are disordered; it reads EEGPSAMMRKADRDRERDDRGGGFRGERDGGGFRGDRGDRGDRGPRRPRDEETADEE. The span at 105–147 shows a compositional bias: basic and acidic residues; the sequence is RKADRDRERDDRGGGFRGERDGGGFRGDRGDRGDRGPRRPRDE.

It belongs to the bacterial ribosomal protein bS6 family.

Its function is as follows. Binds together with bS18 to 16S ribosomal RNA. In Bradyrhizobium sp. (strain BTAi1 / ATCC BAA-1182), this protein is Small ribosomal subunit protein bS6.